The following is a 339-amino-acid chain: Ketol-acid reductoisomerase (NADP(+)) (339 aa).

A KARI N-terminal Rossmann domain is found at 1–182 (MRVYYDRDAD…GGGRAGIIET (182 aa)). NADP(+) contacts are provided by residues 24 to 27 (YGSQ), Arg-48, Ser-51, Thr-53, and 83 to 86 (DELQ). His-108 is a catalytic residue. Gly-134 is a binding site for NADP(+). The KARI C-terminal knotted domain occupies 183-328 (TFKEECETDL…AKLRGMMPWI (146 aa)). Residues Asp-191, Glu-195, Glu-227, and Glu-231 each contribute to the Mg(2+) site. Ser-252 contacts substrate.

The protein belongs to the ketol-acid reductoisomerase family. Requires Mg(2+) as cofactor.

It catalyses the reaction (2R)-2,3-dihydroxy-3-methylbutanoate + NADP(+) = (2S)-2-acetolactate + NADPH + H(+). The catalysed reaction is (2R,3R)-2,3-dihydroxy-3-methylpentanoate + NADP(+) = (S)-2-ethyl-2-hydroxy-3-oxobutanoate + NADPH + H(+). The protein operates within amino-acid biosynthesis; L-isoleucine biosynthesis; L-isoleucine from 2-oxobutanoate: step 2/4. It participates in amino-acid biosynthesis; L-valine biosynthesis; L-valine from pyruvate: step 2/4. Involved in the biosynthesis of branched-chain amino acids (BCAA). Catalyzes an alkyl-migration followed by a ketol-acid reduction of (S)-2-acetolactate (S2AL) to yield (R)-2,3-dihydroxy-isovalerate. In the isomerase reaction, S2AL is rearranged via a Mg-dependent methyl migration to produce 3-hydroxy-3-methyl-2-ketobutyrate (HMKB). In the reductase reaction, this 2-ketoacid undergoes a metal-dependent reduction by NADPH to yield (R)-2,3-dihydroxy-isovalerate. This is Ketol-acid reductoisomerase (NADP(+)) from Methylobacterium radiotolerans (strain ATCC 27329 / DSM 1819 / JCM 2831 / NBRC 15690 / NCIMB 10815 / 0-1).